The following is a 377-amino-acid chain: Histidinol-phosphate aminotransferase 2 (377 aa).

The interval 17-44 is disordered; sequence NLSPYVPGEQPQHDDLCKLNTNENPFPP. Lys228 bears the N6-(pyridoxal phosphate)lysine mark.

The protein belongs to the class-II pyridoxal-phosphate-dependent aminotransferase family. Histidinol-phosphate aminotransferase subfamily. Homodimer. Pyridoxal 5'-phosphate serves as cofactor.

The enzyme catalyses L-histidinol phosphate + 2-oxoglutarate = 3-(imidazol-4-yl)-2-oxopropyl phosphate + L-glutamate. Its pathway is amino-acid biosynthesis; L-histidine biosynthesis; L-histidine from 5-phospho-alpha-D-ribose 1-diphosphate: step 7/9. This Psychrobacter arcticus (strain DSM 17307 / VKM B-2377 / 273-4) protein is Histidinol-phosphate aminotransferase 2.